A 572-amino-acid polypeptide reads, in one-letter code: Bilirubin oxidase (572 aa).

The signal sequence occupies residues 1–19 (MFKHTLGAAALSLLFNSNA). Residues 20 to 38 (VQASPVPETSPATGHLFKR) constitute a propeptide that is removed on maturation. 2 consecutive Plastocyanin-like domains span residues 98 to 194 (VGYD…YMLT) and 404 to 526 (VAFA…VFVD). Cu cation contacts are provided by His-132, His-134, His-172, His-174, His-436, His-439, His-441, His-494, Cys-495, His-496, His-500, and Met-505. N-linked (GlcNAc...) asparagine glycosylation is found at Asn-510 and Asn-520.

This sequence belongs to the multicopper oxidase family. Cu cation serves as cofactor.

The catalysed reaction is 2 (4Z,15Z)-bilirubin IXalpha + O2 = 2 biliverdin IXalpha + 2 H2O. Oxidation of bilirubin and other tetrapyrroles. This chain is Bilirubin oxidase, found in Albifimbria verrucaria (Myrothecium leaf spot and pod blight fungus).